Here is a 142-residue protein sequence, read N- to C-terminus: Small heat shock protein IbpB (142 aa).

Residues 26–137 enclose the sHSP domain; it reads TAEHQAFPPY…APQRIAISDR (112 aa).

Belongs to the small heat shock protein (HSP20) family. In terms of assembly, homodimer. Forms homomultimers of about 100-150 subunits at optimal growth temperatures. Conformation changes to oligomers at high temperatures or high ionic concentrations. The decrease in size of the multimers is accompanied by an increase in chaperone activity.

The protein resides in the cytoplasm. Associates with aggregated proteins, together with IbpA, to stabilize and protect them from irreversible denaturation and extensive proteolysis during heat shock and oxidative stress. Aggregated proteins bound to the IbpAB complex are more efficiently refolded and reactivated by the ATP-dependent chaperone systems ClpB and DnaK/DnaJ/GrpE. Its activity is ATP-independent. The protein is Small heat shock protein IbpB of Enterobacter sp. (strain 638).